A 220-amino-acid chain; its full sequence is Sec-independent protein translocase protein TatB (220 aa).

The chain crosses the membrane as a helical span at residues 1 to 21; sequence MFDIGFSELLLVLVIGLVVLG. The tract at residues 192 to 220 is disordered; it reads KQQIDTIDSHGTDLSSAGPSRIHQPGGDQ.

Belongs to the TatB family. In terms of assembly, the Tat system comprises two distinct complexes: a TatABC complex, containing multiple copies of TatA, TatB and TatC subunits, and a separate TatA complex, containing only TatA subunits. Substrates initially bind to the TatABC complex, which probably triggers association of the separate TatA complex to form the active translocon.

Its subcellular location is the cell inner membrane. Functionally, part of the twin-arginine translocation (Tat) system that transports large folded proteins containing a characteristic twin-arginine motif in their signal peptide across membranes. Together with TatC, TatB is part of a receptor directly interacting with Tat signal peptides. TatB may form an oligomeric binding site that transiently accommodates folded Tat precursor proteins before their translocation. The sequence is that of Sec-independent protein translocase protein TatB from Yersinia pestis bv. Antiqua (strain Antiqua).